The sequence spans 307 residues: 4-hydroxy-tetrahydrodipicolinate synthase (307 aa).

Residue Thr57 coordinates pyruvate. The active-site Proton donor/acceptor is the Tyr145. Lys173 functions as the Schiff-base intermediate with substrate in the catalytic mechanism. Residue Val215 coordinates pyruvate.

The protein belongs to the DapA family. As to quaternary structure, homotetramer; dimer of dimers.

It localises to the cytoplasm. It catalyses the reaction L-aspartate 4-semialdehyde + pyruvate = (2S,4S)-4-hydroxy-2,3,4,5-tetrahydrodipicolinate + H2O + H(+). It participates in amino-acid biosynthesis; L-lysine biosynthesis via DAP pathway; (S)-tetrahydrodipicolinate from L-aspartate: step 3/4. In terms of biological role, catalyzes the condensation of (S)-aspartate-beta-semialdehyde [(S)-ASA] and pyruvate to 4-hydroxy-tetrahydrodipicolinate (HTPA). This chain is 4-hydroxy-tetrahydrodipicolinate synthase, found in Leptospira interrogans serogroup Icterohaemorrhagiae serovar copenhageni (strain Fiocruz L1-130).